The primary structure comprises 175 residues: MSKQDEVIVVGKFGASYGIRGWLKVVSFTDQPESIFDYKPWLIQVKGEWVEFSVESWKRHKGLVCKLKGLDVREEAQTYTNLEIAVKADVLPELSEDEFYWRELFGMEVVTTKGYALGVVDDIFETGSNDVLVVKANLKDAFGKKERLIPFIDEQVIKLIDREAQRIEVDWDPGF.

One can recognise a PRC barrel domain in the interval 95–175 (SEDEFYWREL…RIEVDWDPGF (81 aa)).

Belongs to the RimM family. In terms of assembly, binds ribosomal protein uS19.

Its subcellular location is the cytoplasm. In terms of biological role, an accessory protein needed during the final step in the assembly of 30S ribosomal subunit, possibly for assembly of the head region. Essential for efficient processing of 16S rRNA. May be needed both before and after RbfA during the maturation of 16S rRNA. It has affinity for free ribosomal 30S subunits but not for 70S ribosomes. The sequence is that of Ribosome maturation factor RimM from Aliivibrio fischeri (strain MJ11) (Vibrio fischeri).